Consider the following 611-residue polypeptide: Threonine--tRNA ligase (611 aa).

The interval 1–25 is disordered; it reads MAGPDRKPVSSAAATTPAPSAPVVL. Residues 9–24 are compositionally biased toward low complexity; that stretch reads VSSAAATTPAPSAPVV. Residues 209–502 are catalytic; sequence DHRRIGKDLD…MTENYAGDYP (294 aa). Zn(2+) contacts are provided by cysteine 302, histidine 353, and histidine 479.

It belongs to the class-II aminoacyl-tRNA synthetase family. Homodimer. The cofactor is Zn(2+).

The protein localises to the cytoplasm. It carries out the reaction tRNA(Thr) + L-threonine + ATP = L-threonyl-tRNA(Thr) + AMP + diphosphate + H(+). In terms of biological role, catalyzes the attachment of threonine to tRNA(Thr) in a two-step reaction: L-threonine is first activated by ATP to form Thr-AMP and then transferred to the acceptor end of tRNA(Thr). Also edits incorrectly charged L-seryl-tRNA(Thr). In Parasynechococcus marenigrum (strain WH8102), this protein is Threonine--tRNA ligase.